The following is a 920-amino-acid chain: Coatomer subunit beta'-1 (920 aa).

WD repeat units follow at residues 13-52, 55-94, 97-136, 140-180, 183-224, 227-266, 350-392, and 460-500; these read QRSE…MVKS, VTEL…KIKV, AHAD…LCTQ, GHSH…PNFT, AHLK…CVQT, GHTH…LENT, TCDL…GSAL, and RIDV…SYFD. Positions 850-920 are disordered; the sequence is LEQGDVLDEV…EQWVLTPPQE (71 aa). Residues 854 to 875 show a composition bias toward acidic residues; sequence DVLDEVGEEGEDGEEEEEEDRQ.

This sequence belongs to the WD repeat COPB2 family. As to quaternary structure, oligomeric complex that consists of at least the alpha, beta, beta', gamma, delta, epsilon and zeta subunits.

It is found in the cytoplasm. The protein resides in the golgi apparatus membrane. The protein localises to the cytoplasmic vesicle. It localises to the COPI-coated vesicle membrane. Functionally, the coatomer is a cytosolic protein complex that binds to dilysine motifs and reversibly associates with Golgi non-clathrin-coated vesicles, which further mediate biosynthetic protein transport from the ER, via the Golgi up to the trans Golgi network. Coatomer complex is required for budding from Golgi membranes, and is essential for the retrograde Golgi-to-ER transport of dilysine-tagged proteins. The sequence is that of Coatomer subunit beta'-1 from Arabidopsis thaliana (Mouse-ear cress).